A 111-amino-acid chain; its full sequence is Type III endosome membrane protein TEMP (111 aa).

Residues 1–27 are Extracellular-facing; sequence MIGGNTTIISGAINASTEAPGLGTGGR. Asn-5 carries N-linked (GlcNAc...) asparagine glycosylation. Residues 28–48 traverse the membrane as a helical; Signal-anchor for type III membrane protein segment; the sequence is AWPVLVGVVLGAVVLSILIAL. The Cytoplasmic portion of the chain corresponds to 49–111; it reads AAKCHLCRRY…TTGSRDHFSL (63 aa). The disordered stretch occupies residues 64-111; it reads HRPLSSAGGGNRPPVGEDEDDDGFIEDNYIQPGAGEMETTGSRDHFSL. Residues 79–88 show a composition bias toward acidic residues; the sequence is GEDEDDDGFI.

Expressed in stomach, kidney, large and small intestine and kidney.

Its subcellular location is the membrane. The protein localises to the early endosome. It localises to the recycling endosome. The protein resides in the cell membrane. Functionally, may be involved in membrane trafficking between endosomes and plasma membrane. The protein is Type III endosome membrane protein TEMP of Mus musculus (Mouse).